The primary structure comprises 156 residues: Small ribosomal subunit protein bS18c (156 aa).

Residues 1–54 are disordered; sequence MYTSKQPFLKSKQPFRKSKQPFRKSKQPFRKFKKPFRKSKQPFRRRPRIGPGDR. Residues 13 to 48 show a composition bias toward basic residues; the sequence is QPFRKSKQPFRKSKQPFRKFKKPFRKSKQPFRRRPR.

The protein belongs to the bacterial ribosomal protein bS18 family. Part of the 30S ribosomal subunit.

It is found in the plastid. Its subcellular location is the chloroplast. This chain is Small ribosomal subunit protein bS18c, found in Lolium perenne (Perennial ryegrass).